A 20-amino-acid polypeptide reads, in one-letter code: Dihydrolipoamide-residue succinyltransferase component of 2-oxoglutarate dehydrogenase complex (20 aa).

Belongs to the 2-oxoacid dehydrogenase family. Forms a 24-polypeptide structural core with octahedral symmetry. It depends on (R)-lipoate as a cofactor.

The protein localises to the mitochondrion membrane. The enzyme catalyses N(6)-[(R)-dihydrolipoyl]-L-lysyl-[protein] + succinyl-CoA = N(6)-[(R)-S(8)-succinyldihydrolipoyl]-L-lysyl-[protein] + CoA. The protein operates within amino-acid degradation; L-lysine degradation via saccharopine pathway; glutaryl-CoA from L-lysine: step 6/6. The 2-oxoglutarate dehydrogenase complex catalyzes the overall conversion of 2-oxoglutarate to succinyl-CoA and CO(2). It contains multiple copies of three enzymatic components: 2-oxoglutarate dehydrogenase (E1), dihydrolipoamide succinyltransferase (E2) and lipoamide dehydrogenase (E3). In Solanum tuberosum (Potato), this protein is Dihydrolipoamide-residue succinyltransferase component of 2-oxoglutarate dehydrogenase complex.